Here is a 190-residue protein sequence, read N- to C-terminus: ATP synthase subunit b, chloroplastic (190 aa).

Residues 35 to 55 form a helical membrane-spanning segment; the sequence is LSVVLGVLIFFGKGVCASCLL.

The protein belongs to the ATPase B chain family. F-type ATPases have 2 components, F(1) - the catalytic core - and F(0) - the membrane proton channel. F(1) has five subunits: alpha(3), beta(3), gamma(1), delta(1), epsilon(1). F(0) has four main subunits: a(1), b(1), b'(1) and c(10-14). The alpha and beta chains form an alternating ring which encloses part of the gamma chain. F(1) is attached to F(0) by a central stalk formed by the gamma and epsilon chains, while a peripheral stalk is formed by the delta, b and b' chains.

Its subcellular location is the plastid. It localises to the chloroplast thylakoid membrane. Functionally, f(1)F(0) ATP synthase produces ATP from ADP in the presence of a proton or sodium gradient. F-type ATPases consist of two structural domains, F(1) containing the extramembraneous catalytic core and F(0) containing the membrane proton channel, linked together by a central stalk and a peripheral stalk. During catalysis, ATP synthesis in the catalytic domain of F(1) is coupled via a rotary mechanism of the central stalk subunits to proton translocation. Component of the F(0) channel, it forms part of the peripheral stalk, linking F(1) to F(0). The sequence is that of ATP synthase subunit b, chloroplastic from Coffea arabica (Arabian coffee).